The primary structure comprises 607 residues: WD repeat-containing protein 1 (607 aa).

13 WD repeats span residues 4–45 (ELKK…IRNI), 48–87 (PAIA…IWDT), 93–135 (LLKY…LWDT), 138–176 (SVGE…FFEG), 180–218 (KFKF…LYDG), 224–263 (VGNL…IWDV), 270–306 (TTFH…YLDK), 311–351 (RPLR…YWDA), 358–408 (TFTG…KMDV), 432–474 (LKDK…LYSI), 480–518 (KDEG…VFNV), 523–561 (SEQN…VWTL), and 566–604 (ARIK…QWTV).

This sequence belongs to the WD repeat AIP1 family.

The protein localises to the cell membrane. Its subcellular location is the cytoplasm. It is found in the cytoskeleton. The protein resides in the nucleus. Its function is as follows. Induces disassembly of actin filaments in conjunction with ADF/cofilin family proteins. Doesn't sever actin filaments alone, but caps the barbed ends of filaments severed by cofilin, which blocks annealing and depolymerization and allows more extensive severing by cofilin. The sequence is that of WD repeat-containing protein 1 from Xenopus tropicalis (Western clawed frog).